A 489-amino-acid chain; its full sequence is Cobyric acid synthase (489 aa).

The GATase cobBQ-type domain occupies 251–439 (RLTVVAPVYP…LHGLFDTPAA (189 aa)). Cys-332 serves as the catalytic Nucleophile. His-431 is an active-site residue.

This sequence belongs to the CobB/CobQ family. CobQ subfamily.

The protein operates within cofactor biosynthesis; adenosylcobalamin biosynthesis. Its function is as follows. Catalyzes amidations at positions B, D, E, and G on adenosylcobyrinic A,C-diamide. NH(2) groups are provided by glutamine, and one molecule of ATP is hydrogenolyzed for each amidation. The sequence is that of Cobyric acid synthase from Aromatoleum aromaticum (strain DSM 19018 / LMG 30748 / EbN1) (Azoarcus sp. (strain EbN1)).